The sequence spans 232 residues: MASSAASSEHFEKLHEIFRGLHEDLQGVPERLLGTAGTEEKKKLIRDFDEKQQEANETLAEMEEELRYAPLSFRNPMMSKLRNYRKDLAKLHREVRSTPLTATPGGRGDMKYGIYAVENEHMNRLQSQRAMLLQGTESLNRATQSIERSHRIATETDQIGSEIIEELGEQRDQLERTKSRLVNTSENLSKSRKILRSMSRKVTTNKLLLSIIILLELAILGGLVYYKFFRSH.

Ala2 is subject to N-acetylalanine. Interaction with CLINT1 stretches follow at residues 2 to 23 (ASSA…GLHE) and 69 to 73 (APLSF). Residues 2 to 208 (ASSAASSEHF…SRKVTTNKLL (207 aa)) are Cytoplasmic-facing. Positions 35 to 98 (TAGTEEKKKL…AKLHREVRST (64 aa)) form a coiled coil. Thr103 is modified (phosphothreonine). An Omega-N-methylarginine modification is found at Arg107. Ser138 bears the Phosphoserine mark. Residues 161 to 198 (SEIIEELGEQRDQLERTKSRLVNTSENLSKSRKILRSM) are a coiled coil. A helical; Anchor for type IV membrane protein membrane pass occupies residues 209-229 (LSIIILLELAILGGLVYYKFF). Topologically, residues 230–232 (RSH) are vesicular.

Belongs to the VTI1 family. In terms of assembly, forms a SNARE complex with STX7, STX8 and VAMP8 which functions in the homotypic fusion of late endosomes. Component of the SNARE complex composed of STX7, STX8, VAMP7 and VIT1B that is required for heterotypic fusion of late endosomes with lysosomes. May interact with STX17. Interacts with CLINT1. Expressed in all tissues examined.

The protein resides in the early endosome membrane. It localises to the late endosome membrane. The protein localises to the lysosome membrane. Its subcellular location is the cytoplasmic granule. It is found in the recycling endosome membrane. Its function is as follows. V-SNARE that mediates vesicle transport pathways through interactions with t-SNAREs on the target membrane. These interactions are proposed to mediate aspects of the specificity of vesicle trafficking and to promote fusion of the lipid bilayers. May be concerned with increased secretion of cytokines associated with cellular senescence. This Homo sapiens (Human) protein is Vesicle transport through interaction with t-SNAREs homolog 1B (VTI1B).